Reading from the N-terminus, the 426-residue chain is MSGYPGAGYNGGGYVPPPQPQYGGYYPPQPAYNAYQQPPPQQQQYMVYHQPSPGPQQHQHWNPQQQTPAPQGYGNPPNSHYGRPEANMPTVNSNSYAHGNHQAPPPPPQAPQQFGYGAPADYAFRYSQCNGRHKALLIGINYFGQRGQLRGCINDVRNMSSYLVEHFRYKREDMVILTDDQQNPMSQPTKQNILRAMHWLVKDARPNDSLFFHYSGHGGQTKDLDGDEEDGYDEVIYPVDFRQVGHITDDEMHRIMVRPLQAGVRLTAIFDSCHSGTALDLPYIYSTQGILKEPNLAKEAGQGLLGAISSYSQGDLYGVANNIMGIFKKATGGNDAHARTLATKTSPADVVMFSGSKDDQTSADATIASQATGAMSWAFINALKKNPQQSYVQLLNSIRDELQMRYTQKPQLSCSHPLDTNLLFVM.

Over residues 1–14 (MSGYPGAGYNGGGY) the composition is skewed to gly residues. The disordered stretch occupies residues 1–111 (MSGYPGAGYN…QAPPPPPQAP (111 aa)). Residues 21–68 (QYGGYYPPQPAYNAYQQPPPQQQQYMVYHQPSPGPQQHQHWNPQQQTP) are compositionally biased toward low complexity. Residues H217 and C273 contribute to the active site.

It belongs to the peptidase C14B family.

Involved in cell death (apoptosis). This is Metacaspase-1B (casB) from Neurospora crassa (strain ATCC 24698 / 74-OR23-1A / CBS 708.71 / DSM 1257 / FGSC 987).